Consider the following 168-residue polypeptide: S-ribosylhomocysteine lyase (168 aa).

Fe cation is bound by residues H54, H58, and C128.

This sequence belongs to the LuxS family. As to quaternary structure, homodimer. The cofactor is Fe cation.

The enzyme catalyses S-(5-deoxy-D-ribos-5-yl)-L-homocysteine = (S)-4,5-dihydroxypentane-2,3-dione + L-homocysteine. Functionally, involved in the synthesis of autoinducer 2 (AI-2) which is secreted by bacteria and is used to communicate both the cell density and the metabolic potential of the environment. The regulation of gene expression in response to changes in cell density is called quorum sensing. Catalyzes the transformation of S-ribosylhomocysteine (RHC) to homocysteine (HC) and 4,5-dihydroxy-2,3-pentadione (DPD). The chain is S-ribosylhomocysteine lyase from Neisseria meningitidis serogroup A / serotype 4A (strain DSM 15465 / Z2491).